The following is a 552-amino-acid chain: Hydroxylamine reductase (552 aa).

4 residues coordinate [2Fe-2S] cluster: cysteine 5, cysteine 8, cysteine 20, and cysteine 27. Hybrid [4Fe-2O-2S] cluster-binding residues include histidine 251, glutamate 275, cysteine 319, cysteine 407, cysteine 435, cysteine 460, glutamate 494, and lysine 496. Cysteine 407 bears the Cysteine persulfide mark.

This sequence belongs to the HCP family. The cofactor is [2Fe-2S] cluster. It depends on hybrid [4Fe-2O-2S] cluster as a cofactor.

It localises to the cytoplasm. The catalysed reaction is A + NH4(+) + H2O = hydroxylamine + AH2 + H(+). Functionally, catalyzes the reduction of hydroxylamine to form NH(3) and H(2)O. The sequence is that of Hydroxylamine reductase from Shigella boydii serotype 4 (strain Sb227).